A 289-amino-acid polypeptide reads, in one-letter code: Diacylglycerol pyrophosphate phosphatase 1 (289 aa).

Over 1 to 21 the chain is Vacuolar; the sequence is MNRVSFIKTPFNIGAKWRLED. A helical transmembrane segment spans residues 22–42; it reads VFLLIIMILLNYPVYYQQPFE. Residues 43-65 lie on the Cytoplasmic side of the membrane; it reads RQFYINDLTISHPYATTERVNNN. Residues 66 to 86 form a helical membrane-spanning segment; the sequence is MLFVYSFVVPSLTILIIGSIL. The Vacuolar segment spans residues 87-92; the sequence is ADRRHL. The chain crosses the membrane as a helical span at residues 93–113; the sequence is IFILYTSLLGLSLAWFSTSFF. The Cytoplasmic segment spans residues 114–172; the sequence is TNFIKNWIGRLRPDFLDRCQPVEGLPLDTLFTAKDVCTTKNHERLLDGFRTTPSGHSSE. The phosphatase sequence motif I stretch occupies residues 118–126; the sequence is KNWIGRLRP. The interval 166–169 is phosphatase sequence motif II; sequence PSGH. The next 2 membrane-spanning stretches (helical) occupy residues 173-193 and 194-214; these read SFAGLGYLYFWLCGQLLTESP and LMPLWRKMVAFLPLLGAALIA. Topologically, residues 215–222 are cytoplasmic; the sequence is LSRTQDYR. Residues 216–227 are phosphatase sequence motif III; sequence SRTQDYRHHFVD. A helical membrane pass occupies residues 223–243; that stretch reads HHFVDVILGSMLGYIMAHFFY. Residues 244–289 are Vacuolar-facing; sequence RRIFPPIDDPLPFKPLMDDSDVTLEEAVTHQRIPDEELHPLSDEGM. Phosphoserine is present on Ser285.

The protein belongs to the PA-phosphatase related phosphoesterase family.

Its subcellular location is the vacuole membrane. It catalyses the reaction a 1,2-diacyl-sn-glycerol 3-diphosphate + H2O = a 1,2-diacyl-sn-glycero-3-phosphate + phosphate + H(+). The enzyme catalyses a 1,2-diacyl-sn-glycero-3-phosphate + H2O = a 1,2-diacyl-sn-glycerol + phosphate. The catalysed reaction is a 1-acyl-sn-glycero-3-phosphate + H2O = a 1-acyl-sn-glycerol + phosphate. Its activity is regulated as follows. Inhibited by sodium fluoride (NaF) and pyrophosphate. Strongly inhibited by manganese ion and, to a lower extent, by magnesium and calcium ions. Also inhibited by Cu(2+) ion. In an indirect manner, it is also inhibited by the zinc ion which is able to form a complex with DGPP and prevent the enzyme from removing the phosphate from the substrate. Not inhibited by N-ethylmaleimide. Catalyzes the dephosphorylation of diacylglycerol diphosphate (DGPP) to phosphatidate (PA) and the subsequent dephosphorylation of PA to diacylglycerol (DAG). Together with LPP1, regulates intracellular DGPP and PA levels, which are phospholipid molecules believed to play a signaling role in stress response. Can also use lysophosphatidic acid (LPA) and phosphatidylglycerophosphate as substrates. Substrate preference is DGPP &gt; LPA &gt; PA. Activity is independent of a divalent cation ion and insensitive to inhibition by N-ethylmaleimide. This is Diacylglycerol pyrophosphate phosphatase 1 (DPP1) from Saccharomyces cerevisiae (strain ATCC 204508 / S288c) (Baker's yeast).